Consider the following 558-residue polypeptide: Arginine--tRNA ligase (558 aa).

Residues A134 to Q144 carry the 'HIGH' region motif.

It belongs to the class-I aminoacyl-tRNA synthetase family. In terms of assembly, monomer.

Its subcellular location is the cytoplasm. The catalysed reaction is tRNA(Arg) + L-arginine + ATP = L-arginyl-tRNA(Arg) + AMP + diphosphate. The chain is Arginine--tRNA ligase from Symbiobacterium thermophilum (strain DSM 24528 / JCM 14929 / IAM 14863 / T).